A 360-amino-acid polypeptide reads, in one-letter code: S-adenosylmethionine:tRNA ribosyltransferase-isomerase (360 aa).

It belongs to the QueA family. In terms of assembly, monomer.

It localises to the cytoplasm. The catalysed reaction is 7-aminomethyl-7-carbaguanosine(34) in tRNA + S-adenosyl-L-methionine = epoxyqueuosine(34) in tRNA + adenine + L-methionine + 2 H(+). Its pathway is tRNA modification; tRNA-queuosine biosynthesis. In terms of biological role, transfers and isomerizes the ribose moiety from AdoMet to the 7-aminomethyl group of 7-deazaguanine (preQ1-tRNA) to give epoxyqueuosine (oQ-tRNA). The protein is S-adenosylmethionine:tRNA ribosyltransferase-isomerase of Nitrobacter winogradskyi (strain ATCC 25391 / DSM 10237 / CIP 104748 / NCIMB 11846 / Nb-255).